The chain runs to 382 residues: Lipid-A-disaccharide synthase (382 aa).

It belongs to the LpxB family.

The enzyme catalyses 2-N,3-O-bis[(3R)-3-hydroxytetradecanoyl]-alpha-D-glucosaminyl 1-phosphate + UDP-2-N,3-O-bis[(3R)-3-hydroxytetradecanoyl]-alpha-D-glucosamine = lipid A disaccharide (E. coli) + UDP + H(+). It carries out the reaction a lipid X + a UDP-2-N,3-O-bis[(3R)-3-hydroxyacyl]-alpha-D-glucosamine = a lipid A disaccharide + UDP + H(+). It participates in glycolipid biosynthesis; lipid IV(A) biosynthesis; lipid IV(A) from (3R)-3-hydroxytetradecanoyl-[acyl-carrier-protein] and UDP-N-acetyl-alpha-D-glucosamine: step 5/6. In terms of biological role, condensation of UDP-2,3-diacylglucosamine and 2,3-diacylglucosamine-1-phosphate to form lipid A disaccharide, a precursor of lipid A, a phosphorylated glycolipid that anchors the lipopolysaccharide to the outer membrane of the cell. This is Lipid-A-disaccharide synthase from Serratia proteamaculans (strain 568).